A 233-amino-acid chain; its full sequence is Purine nucleoside phosphorylase DeoD-type (233 aa).

An a purine D-ribonucleoside-binding site is contributed by His-4. Phosphate is bound by residues Gly-20, Arg-24, Arg-43, and 87-90; that span reads RIGT. A purine D-ribonucleoside-binding positions include 179-181 and 203-204; these read EME and SD. The active-site Proton donor is the Asp-204.

The protein belongs to the PNP/UDP phosphorylase family. As to quaternary structure, homohexamer; trimer of homodimers.

The catalysed reaction is a purine D-ribonucleoside + phosphate = a purine nucleobase + alpha-D-ribose 1-phosphate. The enzyme catalyses a purine 2'-deoxy-D-ribonucleoside + phosphate = a purine nucleobase + 2-deoxy-alpha-D-ribose 1-phosphate. Catalyzes the reversible phosphorolytic breakdown of the N-glycosidic bond in the beta-(deoxy)ribonucleoside molecules, with the formation of the corresponding free purine bases and pentose-1-phosphate. This is Purine nucleoside phosphorylase DeoD-type from Helicobacter pylori (strain J99 / ATCC 700824) (Campylobacter pylori J99).